Reading from the N-terminus, the 336-residue chain is Galactose/methyl galactoside import permease protein MglC (336 aa).

Over 1–16 (MSALNKKSFLTYLKEG) the chain is Periplasmic. A helical membrane pass occupies residues 17–37 (GIYVVLLVLLAIIIFQDPTFL). Over 38–52 (SLLNLSNILTQSSVR) the chain is Cytoplasmic. Residues 53-73 (IIIALGVAGLIVTQGTDLSAG) traverse the membrane as a helical segment. Residues 74 to 106 (RQVGLAAVVAATLLQSMDNANKVFPEMATMPIA) lie on the Periplasmic side of the membrane. Transmembrane regions (helical) follow at residues 107-127 (LVIL…GLII) and 128-148 (AYLN…VYGI). At 149–180 (NSLYYDFVGASPISGFDSGFSTFAQGFVALGS) the chain is on the periplasmic side. The helical transmembrane segment at 181-201 (FRLSYITFYALIAVAFVWVLW) threads the bilayer. Topologically, residues 202-226 (NKTRFGKNIFAIGGNPEAAKVSGVN) are cytoplasmic. A helical membrane pass occupies residues 227–247 (VGLNLLMIYALSGVFYAFGGM). The Periplasmic portion of the chain corresponds to 248–256 (LEAGRIGSA). The helical transmembrane segment at 257 to 277 (TNNLGFMYELDAIAACVVGGV) threads the bilayer. A topological domain (cytoplasmic) is located at residue Ser278. Residues 279 to 299 (FSGGVGTVIGVVTGVIIFTVI) form a helical membrane-spanning segment. Residues 300-305 (NYGLTY) lie on the Periplasmic side of the membrane. Residues 306 to 326 (IGVNPYWQYIIKGAIIIFAVA) traverse the membrane as a helical segment. The Cytoplasmic segment spans residues 327-336 (LDSLKYARKK).

The protein belongs to the binding-protein-dependent transport system permease family. AraH/RbsC subfamily. In terms of assembly, the complex is composed of one ATP-binding protein (MglA), two transmembrane proteins (MglC) and a solute-binding protein (MglB).

It is found in the cell inner membrane. Its function is as follows. Part of the ABC transporter complex MglABC involved in galactose/methyl galactoside import. Probably responsible for the translocation of the substrate across the membrane. In Escherichia coli (strain K12), this protein is Galactose/methyl galactoside import permease protein MglC (mglC).